Consider the following 95-residue polypeptide: Aspartyl/glutamyl-tRNA(Asn/Gln) amidotransferase subunit C (95 aa).

The protein belongs to the GatC family. In terms of assembly, heterotrimer of A, B and C subunits.

The enzyme catalyses L-glutamyl-tRNA(Gln) + L-glutamine + ATP + H2O = L-glutaminyl-tRNA(Gln) + L-glutamate + ADP + phosphate + H(+). It catalyses the reaction L-aspartyl-tRNA(Asn) + L-glutamine + ATP + H2O = L-asparaginyl-tRNA(Asn) + L-glutamate + ADP + phosphate + 2 H(+). Allows the formation of correctly charged Asn-tRNA(Asn) or Gln-tRNA(Gln) through the transamidation of misacylated Asp-tRNA(Asn) or Glu-tRNA(Gln) in organisms which lack either or both of asparaginyl-tRNA or glutaminyl-tRNA synthetases. The reaction takes place in the presence of glutamine and ATP through an activated phospho-Asp-tRNA(Asn) or phospho-Glu-tRNA(Gln). This is Aspartyl/glutamyl-tRNA(Asn/Gln) amidotransferase subunit C from Gluconobacter oxydans (strain 621H) (Gluconobacter suboxydans).